The following is a 462-amino-acid chain: MARVLGAPVALGLWSLCWSLAIATPLPPTSAHGNVAEGETKPDPDVTERCSDGWSFDATTLDDNGTMLFFKGEFVWKSHKWDRELISERWKNFPSPVDAAFRQGHNSVFLIKGDKVWVYPPEKKEKGYPKLLQDEFPGIPSPLDAAVECHRGECQAEGVLFFQGDREWFWDLATGTMKERSWPAVGNCSSALRWLGRYYCFQGNQFLRFDPVRGEVPPRYPRDVRDYFMPCPGRGHGHRNGTGHGNSTHHGPEYMRCSPHLVLSALTSDNHGATYAFSGTHYWRLDTSRDGWHSWPIAHQWPQGPSAVDAAFSWEEKLYLVQGTQVYVFLTKGGYTLVSGYPKRLEKEVGTPHGIILDSVDAAFICPGSSRLHIMAGRRLWWLDLKSGAQATWTELPWPHEKVDGALCMEKSLGPNSCSANGPGLYLIHGPNLYCYSDVEKLNAAKALPQPQNVTSLLGCTH.

The signal sequence occupies residues 1–23; the sequence is MARVLGAPVALGLWSLCWSLAIA. O-linked (GalNAc...) threonine glycosylation is found at T24 and T29. A disordered region spans residues 29-48; sequence TSAHGNVAEGETKPDPDVTE. The segment at 30-40 is O-glycosylated at one site; it reads SAHGNVAEGET. The segment covering 38–48 has biased composition (basic and acidic residues); that stretch reads GETKPDPDVTE. 3 disulfides stabilise this stretch: C50–C231, C149–C154, and C188–C200. 4 Hemopexin repeats span residues 53 to 93, 94 to 139, 140 to 184, and 185 to 231; these read GWSF…WKNF, PSPV…FPGI, PSPL…SWPA, and VGNC…FMPC. N64 is a glycosylation site (N-linked (GlcNAc...) (complex) asparagine). A heme-binding site is contributed by H79. H150 serves as a coordination point for heme. The N-linked (GlcNAc...) (complex) asparagine glycan is linked to N187. H236 serves as a coordination point for heme. 2 N-linked (GlcNAc...) asparagine glycosylation sites follow: N240 and N246. 3 disulfide bridges follow: C257/C460, C366/C408, and C418/C435. 4 Hemopexin repeats span residues 259-304, 305-352, 357-396, and 400-450; these read PHLV…WPQG, PSAV…VGTP, LDSVDAAFICPGSSRLHIMAGRRLWWLDLKSGAQATWTEL, and HEKV…ALPQ. H293 is a binding site for heme. Residue N453 is glycosylated (N-linked (GlcNAc...) (complex) asparagine).

This sequence belongs to the hemopexin family. Interacts with FLVCR1. As to quaternary structure, (Microbial infection) Interacts with hepatitis E virus/HEV protein ORF3. In terms of processing, N- and O-glycosylated. O-glycosylated with core 1 or possibly core 8 glycans. O-glycosylation in the 30-40 region is minor compared to glycosylation at Thr-24 and Thr-29. Expressed by the liver and secreted in plasma.

It is found in the secreted. Its function is as follows. Binds heme and transports it to the liver for breakdown and iron recovery, after which the free hemopexin returns to the circulation. In Homo sapiens (Human), this protein is Hemopexin (HPX).